The primary structure comprises 256 residues: Trypsin, alkaline B (256 aa).

The signal sequence occupies residues 1 to 17; the sequence is MRLFLALLALGFAAVAA. Positions 18 to 24 are cleaved as a propeptide — activation peptide; the sequence is VPANPQR. Positions 25 to 256 constitute a Peptidase S1 domain; that stretch reads IVGGSTTTIQ…RFANWIRNNS (232 aa). Cysteine 55 and cysteine 71 are disulfide-bonded. Active-site charge relay system residues include histidine 70 and aspartate 115. 2 disulfide bridges follow: cysteine 180–cysteine 197 and cysteine 209–cysteine 233. The active-site Charge relay system is the serine 213.

It belongs to the peptidase S1 family. As to expression, midgut.

It is found in the secreted. Its subcellular location is the extracellular space. The enzyme catalyses Preferential cleavage: Arg-|-Xaa, Lys-|-Xaa.. The sequence is that of Trypsin, alkaline B from Manduca sexta (Tobacco hawkmoth).